The sequence spans 552 residues: Non-structural protein NS1 (552 aa).

In Bluetongue virus 1 (isolate South Africa) (BTV 1), this protein is Non-structural protein NS1 (Segment-5).